Here is a 616-residue protein sequence, read N- to C-terminus: Sodium- and chloride-dependent transporter XTRP3 (616 aa).

Residues 1 to 11 (MRLAIKRRASR) are compositionally biased toward basic residues. Positions 1–26 (MRLAIKRRASRGQRPGPDEKRARDME) are disordered. The Cytoplasmic segment spans residues 1-37 (MRLAIKRRASRGQRPGPDEKRARDMEKARPQWGNPLQ). Residues 16-26 (GPDEKRARDME) are compositionally biased toward basic and acidic residues. Residues 38 to 58 (FVFACISYAVGLGNVWRFPYL) form a helical membrane-spanning segment. Topologically, residues 59–66 (CQMYGGGS) are extracellular. A helical membrane pass occupies residues 67–87 (FLVPYLIMLIVEGMPLLYLEL). The Cytoplasmic portion of the chain corresponds to 88–103 (AVGQRMRQGSIGAWRT). Residues 104–124 (ISPYLSGVGVASVVVSFFLSM) form a helical membrane-spanning segment. Residues 125–189 (YYNVINAWGF…ISPSIQENGG (65 aa)) are Extracellular-facing. N-linked (GlcNAc...) asparagine glycosylation occurs at Asn155. A helical membrane pass occupies residues 190–210 (VQWEPALCLTLAWLMVYLCIL). Residues 211 to 218 (RGTESTGK) are Cytoplasmic-facing. The chain crosses the membrane as a helical span at residues 219–239 (VVYFTALMPYCVLIIYLVRGL). The Extracellular segment spans residues 240–265 (TLHGATNGLMYMFTPKIEQLANPKAW). A helical transmembrane segment spans residues 266-286 (INAATQIFFSLGLGFGSLIAF). Topologically, residues 287–300 (ASYNEPSNDCQKHA) are cytoplasmic. A helical transmembrane segment spans residues 301–321 (VIVSVINSSTSIFASIVTFSI). The Extracellular segment spans residues 322-413 (YGFKATFNYE…EAIKNMEVSQ (92 aa)). N-linked (GlcNAc...) asparagine glycosylation is present at Asn381. A helical membrane pass occupies residues 414-434 (LWSVLYFFMLLMLGMGSMLGN). The Cytoplasmic portion of the chain corresponds to 435-455 (TAAILTPLTDSKVISSYLPKE). Residues 456 to 476 (AISGLVCLINCAVGMVFTMEA) form a helical membrane-spanning segment. Residues 477-489 (GNYWFDIFNDYAA) are Extracellular-facing. Residues 490–510 (TLSLLLIVLVETIAVCYVYGL) traverse the membrane as a helical segment. At 511–533 (RRFESDLRAMTGRPLNWYWKAMW) the chain is on the cytoplasmic side. The chain crosses the membrane as a helical span at residues 534–554 (AFVSPLLIIGLFIFYLSDYIL). Residues 555-578 (TGTLQYQAWDATQGQLVTKDYPPH) are Extracellular-facing. The chain crosses the membrane as a helical span at residues 579–599 (ALAVIGLLVASSTMCIPLVAL). The Cytoplasmic segment spans residues 600–616 (GTFIRNRLKRGGSSPVA).

The protein belongs to the sodium:neurotransmitter symporter (SNF) (TC 2.A.22) family. SLC6A20 subfamily. Highly expressed in epithelial cells of duodenum, jejunum, ileum, stomach, cecum, colon and kidney proximal tubule. Also expressed in the choroid plexus, microglia and meniges of the brain and in the ovary.

The protein resides in the apical cell membrane. It carries out the reaction L-proline(out) + chloride(out) + 2 Na(+)(out) = L-proline(in) + chloride(in) + 2 Na(+)(in). The enzyme catalyses 4-hydroxy-L-proline(out) + chloride(out) + 2 Na(+)(out) = 4-hydroxy-L-proline(in) + chloride(in) + 2 Na(+)(in). It catalyses the reaction 2-methyl-2-(methylamino)propanoate(out) + chloride(out) + 2 Na(+)(out) = 2-methyl-2-(methylamino)propanoate(in) + chloride(in) + 2 Na(+)(in). The catalysed reaction is L-pipecolate(out) + chloride(out) + 2 Na(+)(out) = L-pipecolate(in) + chloride(in) + 2 Na(+)(in). It carries out the reaction glycine betaine(out) + chloride(out) + 2 Na(+)(out) = glycine betaine(in) + chloride(in) + 2 Na(+)(in). The enzyme catalyses glycine(out) + chloride(out) + 2 Na(+)(out) = glycine(in) + chloride(in) + 2 Na(+)(in). Functionally, mediates the Na(+)- and Cl(-)-dependent uptake of imino acids such as L-proline, N-methyl-L-proline and pipecolate as well as N-methylated amino acids. Also transports glycine, regulates proline and glycine homeostasis in the brain playing a role in the modulation of NMDAR currents. The chain is Sodium- and chloride-dependent transporter XTRP3 from Rattus norvegicus (Rat).